The following is a 195-amino-acid chain: MDIKEIALGQIRDSIATKQKCIDSILEDIIKAGEIVSKILQAGNTIFLCGNGGSSCDASHIAAELVVRYKSGNERKALPALSLSADSAVLTACSNDYGYEEIFSRQIEAFGRKGDLLIGLSTSGNSKNVLLALEKAKTRGVKTISLLGGDGGKMKNLSDLDVIVPSNVTARIQESHILIGHIICSIVEYNLFKME.

The region spanning 35 to 195 is the SIS domain; that stretch reads IVSKILQAGN…IVEYNLFKME (161 aa). Position 51–53 (51–53) interacts with substrate; it reads NGG. Zn(2+) contacts are provided by histidine 60 and glutamate 64. Substrate contacts are provided by residues glutamate 64, 95-96, 121-123, serine 126, and glutamine 173; these read ND and STS. 2 residues coordinate Zn(2+): glutamine 173 and histidine 181.

Belongs to the SIS family. GmhA subfamily. It depends on Zn(2+) as a cofactor.

The protein resides in the cytoplasm. The catalysed reaction is 2 D-sedoheptulose 7-phosphate = D-glycero-alpha-D-manno-heptose 7-phosphate + D-glycero-beta-D-manno-heptose 7-phosphate. The protein operates within carbohydrate biosynthesis; D-glycero-D-manno-heptose 7-phosphate biosynthesis; D-glycero-alpha-D-manno-heptose 7-phosphate and D-glycero-beta-D-manno-heptose 7-phosphate from sedoheptulose 7-phosphate: step 1/1. Catalyzes the isomerization of sedoheptulose 7-phosphate in D-glycero-D-manno-heptose 7-phosphate. The protein is Phosphoheptose isomerase of Leptospira interrogans serogroup Icterohaemorrhagiae serovar copenhageni (strain Fiocruz L1-130).